Here is a 234-residue protein sequence, read N- to C-terminus: Small ribosomal subunit protein uS2 (234 aa).

Belongs to the universal ribosomal protein uS2 family.

This chain is Small ribosomal subunit protein uS2, found in Clostridium kluyveri (strain NBRC 12016).